Here is a 351-residue protein sequence, read N- to C-terminus: Histidinol-phosphate aminotransferase (351 aa).

K215 carries the N6-(pyridoxal phosphate)lysine modification.

Belongs to the class-II pyridoxal-phosphate-dependent aminotransferase family. Histidinol-phosphate aminotransferase subfamily. It depends on pyridoxal 5'-phosphate as a cofactor.

It carries out the reaction L-histidinol phosphate + 2-oxoglutarate = 3-(imidazol-4-yl)-2-oxopropyl phosphate + L-glutamate. It functions in the pathway amino-acid biosynthesis; L-histidine biosynthesis; L-histidine from 5-phospho-alpha-D-ribose 1-diphosphate: step 7/9. This Methanocorpusculum labreanum (strain ATCC 43576 / DSM 4855 / Z) protein is Histidinol-phosphate aminotransferase.